We begin with the raw amino-acid sequence, 199 residues long: Chaperone protein TorD (199 aa).

The protein belongs to the TorD/DmsD family. TorD subfamily.

The protein localises to the cytoplasm. Functionally, involved in the biogenesis of TorA. Acts on TorA before the insertion of the molybdenum cofactor and, as a result, probably favors a conformation of the apoenzyme that is competent for acquiring the cofactor. This Actinobacillus pleuropneumoniae serotype 3 (strain JL03) protein is Chaperone protein TorD.